The following is a 681-amino-acid chain: Proton channel OTOP3 (681 aa).

A compositionally biased stretch (basic and acidic residues) spans 1–25 (MLSKEEPACRQFHSREKTWGNEHNG). The segment at 1–26 (MLSKEEPACRQFHSREKTWGNEHNGK) is disordered. The Cytoplasmic portion of the chain corresponds to 1–112 (MLSKEEPACR…LHQRAKKTGR (112 aa)). Residues 113–133 (LFSGLFGLNLMFLGGTVVSSV) form a helical membrane-spanning segment. At 134–143 (ALSNKAVPER) the chain is on the extracellular side. A helical transmembrane segment spans residues 144–166 (DSQSFLCILMLLSSVWALYHLLF). At 167 to 182 (IRNQNGAVHHDHHAGA) the chain is on the cytoplasmic side. A helical transmembrane segment spans residues 183 to 204 (MWLKASLAIFGVCSIILSIFEI). The Extracellular portion of the chain corresponds to 205–216 (GHALLLQNCEIL). A helical membrane pass occupies residues 217–240 (MDIVFFSIEIVFVSVQTVLLWVSC). Residues 241 to 248 (KDCVQMHH) are Cytoplasmic-facing. A helical membrane pass occupies residues 249–271 (SVTRYGIMLTLATDILLWLTAVI). The Extracellular segment spans residues 272 to 317 (DDSLEQDLEILQSNSTQDESNEMAQCQCPTDSMCWGLKQGYVTMFP). A helical transmembrane segment spans residues 318 to 334 (FNIEYSLICATLLFIMW). The Cytoplasmic segment spans residues 335–358 (KNVGRREKLHSDPPRHTFQLRGII). Residues 359-378 (YGPLIGGAALLVGISVFVQY) form a helical membrane-spanning segment. Residues 379 to 392 (QVEATSGMVSILSY) lie on the Extracellular side of the membrane. The helical transmembrane segment at 393-415 (HMYYGYKMIILAPMIVCSVAGII) threads the bilayer. Over 416-507 (AHSLREKEKK…QGKMKNYTRK (92 aa)) the chain is Cytoplasmic. Residues 508–529 (LDVTLLFVSAVGQLGISYFSII) form a helical membrane-spanning segment. At 530–540 (ATVVTTPWTML) the chain is on the extracellular side. The chain crosses the membrane as a helical span at residues 541–563 (SALNFSNSLLLILQYLSQTMFII). Residues 564–614 (ESMRSIHEEEKEKPGHHEESHRRMSVQEMHKAPPSCLDAGHLGLSRRVVKE) are Cytoplasmic-facing. Residues 615–632 (MAMFLMICNIMCWILGAF) traverse the membrane as a helical segment. Topologically, residues 633–651 (GAHPLYMNGLERQLYGSGI) are extracellular. Residues 652-674 (WLAILNIGLPLSVFYRMHSVGIL) form a helical membrane-spanning segment. Topologically, residues 675 to 681 (LEVYLHA) are cytoplasmic.

It belongs to the otopetrin family. As to quaternary structure, homodimer.

It is found in the cell membrane. It catalyses the reaction H(+)(in) = H(+)(out). Its activity is regulated as follows. pH regulates the proton channel activity from both sides of the plasma membrane. Low pH activates the channel from the extracellular side but inactivates the channel on the intracellular side. Zn(2+) and Ca(2+) can partially block the channel. In terms of biological role, proton-selective channel gated by extracellular protons. The polypeptide is Proton channel OTOP3 (otop3) (Xenopus tropicalis (Western clawed frog)).